Here is a 396-residue protein sequence, read N- to C-terminus: Tryptophan synthase beta chain (396 aa).

Lysine 90 bears the N6-(pyridoxal phosphate)lysine mark.

The protein belongs to the TrpB family. In terms of assembly, tetramer of two alpha and two beta chains. Requires pyridoxal 5'-phosphate as cofactor.

The enzyme catalyses (1S,2R)-1-C-(indol-3-yl)glycerol 3-phosphate + L-serine = D-glyceraldehyde 3-phosphate + L-tryptophan + H2O. The protein operates within amino-acid biosynthesis; L-tryptophan biosynthesis; L-tryptophan from chorismate: step 5/5. The beta subunit is responsible for the synthesis of L-tryptophan from indole and L-serine. The chain is Tryptophan synthase beta chain from Clostridium kluyveri (strain NBRC 12016).